The primary structure comprises 188 residues: Inosine triphosphate pyrophosphatase (188 aa).

Position 9–14 (9–14 (TGNAKK)) interacts with ITP. Glutamate 39 contributes to the Mg(2+) binding site. Residues lysine 51, 67-68 (DT), lysine 84, 143-146 (FGWD), lysine 166, and 171-172 (HR) each bind ITP.

The protein belongs to the HAM1 NTPase family. In terms of assembly, homodimer. The cofactor is Mg(2+). Mn(2+) serves as cofactor.

The protein resides in the cytoplasm. It catalyses the reaction ITP + H2O = IMP + diphosphate + H(+). It carries out the reaction dITP + H2O = dIMP + diphosphate + H(+). The catalysed reaction is XTP + H2O = XMP + diphosphate + H(+). Pyrophosphatase that hydrolyzes non-canonical purine nucleotides such as inosine triphosphate (ITP), deoxyinosine triphosphate (dITP) or xanthosine 5'-triphosphate (XTP) to their respective monophosphate derivatives. The enzyme does not distinguish between the deoxy- and ribose forms. Probably excludes non-canonical purines from RNA and DNA precursor pools, thus preventing their incorporation into RNA and DNA and avoiding chromosomal lesions. This Anopheles gambiae (African malaria mosquito) protein is Inosine triphosphate pyrophosphatase.